The sequence spans 497 residues: Lysine--tRNA ligase (497 aa).

Mg(2+) contacts are provided by E409 and E416.

This sequence belongs to the class-II aminoacyl-tRNA synthetase family. Homodimer. Requires Mg(2+) as cofactor.

It is found in the cytoplasm. It carries out the reaction tRNA(Lys) + L-lysine + ATP = L-lysyl-tRNA(Lys) + AMP + diphosphate. The chain is Lysine--tRNA ligase from Streptococcus pyogenes serotype M49 (strain NZ131).